The chain runs to 194 residues: E3 ubiquitin-protein ligase RNF4 (194 aa).

Residues 1-12 (MSTRNPQRKRRG) show a composition bias toward basic residues. Positions 1-20 (MSTRNPQRKRRGGTVNSRQT) are required for ubiquitination activity. The interval 1 to 39 (MSTRNPQRKRRGGTVNSRQTQKRTRETTSTPEVSLETEP) is disordered. The tract at residues 6–65 (PQRKRRGGTVNSRQTQKRTRETTSTPEVSLETEPIELVETVGDEIVDLTCESLEPVVVDL) is mediates interaction with TRPS1. Residues 40–43 (IELV) carry the SUMO interaction motif 1; mediates the binding to polysumoylated substrates motif. The SUMO interaction motif 2; mediates the binding to polysumoylated substrates signature appears at 50 to 53 (IVDL). An SUMO interaction motif 3; mediates the binding to polysumoylated substrates motif is present at residues 61–63 (VVV). An SUMO interaction motif 4; mediates the binding to polysumoylated substrates motif is present at residues 71–74 (VVIV). Ser98 and Ser99 each carry phosphoserine. Residues 110 to 130 (VYVTTHTPRSTKDDGATGPRP) are disordered. Residues Cys136, Cys139, Cys158, His160, Cys163, Cys166, Cys177, and Cys180 each coordinate Zn(2+). An RING-type zinc finger spans residues 136-181 (CPICMDGYSEIVQNGRLIVSTECGHVFCSQCLRDSLKNANTCPTCR).

As to quaternary structure, homodimer (via RING-type zinc finger domain). Interacts with GSC2. Interacts with AR/the androgen receptor and TBP. Interacts with TCF20. Interacts with PATZ1. Interacts with TRPS1; negatively regulates TRPS1 transcriptional repressor activity. Interacts with PML (isoform PML-1, isoform PML-2, isoform PML-3, isoform PML-4, isoform PML-5 and isoform PML-6). Interacts with PRDM1/Blimp-1. In terms of processing, sumoylated; conjugated by one or two SUMO1 moieties. Autoubiquitinated. In the embryo, expressed primarily in the developing nervous system with strong expression in the dorsal root ganglia and gonads. Ubiquitously expressed in the adult.

It is found in the cytoplasm. It localises to the nucleus. The protein localises to the PML body. It catalyses the reaction S-ubiquitinyl-[E2 ubiquitin-conjugating enzyme]-L-cysteine + [acceptor protein]-L-lysine = [E2 ubiquitin-conjugating enzyme]-L-cysteine + N(6)-ubiquitinyl-[acceptor protein]-L-lysine.. It participates in protein modification; protein ubiquitination. Functionally, E3 ubiquitin-protein ligase which binds polysumoylated chains covalently attached to proteins and mediates 'Lys-6'-, 'Lys-11'-, 'Lys-48'- and 'Lys-63'-linked polyubiquitination of those substrates and their subsequent targeting to the proteasome for degradation. Regulates the degradation of several proteins including PML and the transcriptional activator PEA3. Involved in chromosome alignment and spindle assembly, it regulates the kinetochore CENPH-CENPI-CENPK complex by targeting polysumoylated CENPI to proteasomal degradation. Regulates the cellular responses to hypoxia and heat shock through degradation of respectively EPAS1 and PARP1. Alternatively, it may also bind DNA/nucleosomes and have a more direct role in the regulation of transcription for instance enhancing basal transcription and steroid receptor-mediated transcriptional activation. Catalyzes ubiquitination of sumoylated PARP1 in response to PARP1 trapping to chromatin, leading to PARP1 removal from chromatin by VCP/p97. This chain is E3 ubiquitin-protein ligase RNF4, found in Mus musculus (Mouse).